Here is a 561-residue protein sequence, read N- to C-terminus: Putative transport protein YbjL (561 aa).

Transmembrane regions (helical) follow at residues L8–G28, L32–Q52, F66–F86, M94–F114, and N158–A178. 2 consecutive RCK C-terminal domains span residues R200–N288 and V292–F373. 5 helical membrane-spanning segments follow: residues L383–F403, F406–L426, F447–G467, M475–A495, and A540–L560.

It belongs to the AAE transporter (TC 2.A.81) family. YbjL subfamily.

It is found in the cell membrane. This Salmonella dublin (strain CT_02021853) protein is Putative transport protein YbjL.